The primary structure comprises 362 residues: Lipoprotein p35 (362 aa).

A signal peptide spans 1 to 30; that stretch reads MKIKKIKLLKALALTGAFGIVATVPVIVSS. Cys-31 carries the N-palmitoyl cysteine lipid modification. Cys-31 carries S-diacylglycerol cysteine lipidation. The tract at residues 33-53 is disordered; sequence STSENNGNGNGNGGTDGNTQQ.

This sequence belongs to the p35 lipoprotein family. In terms of processing, the N-terminus is blocked.

The protein resides in the cell membrane. In terms of biological role, major M.penetrans antigen. The polypeptide is Lipoprotein p35 (Malacoplasma penetrans (Mycoplasma penetrans)).